Consider the following 290-residue polypeptide: Protein EURL homolog (290 aa).

Positions Ser-185–Gln-206 are disordered. Positions Ala-228 to Leu-251 form a coiled coil.

This sequence belongs to the EURL family. Interacts with CCDC85B. As to expression, expressed in brain (at protein level). Expressed in neural progenitor cells and postmitotic neurons of the embryonic cerebral cortex.

In terms of biological role, plays a role in cortical progenitor cell proliferation and differentiation. Promotes dendritic spine development of post-migratory cortical projection neurons by modulating the beta-catenin signaling pathway. In Mus musculus (Mouse), this protein is Protein EURL homolog.